The following is a 452-amino-acid chain: Friend leukemia integration 1 transcription factor (452 aa).

Phosphoserine is present on serine 39. In terms of domain architecture, PNT spans 112 to 198 (PPPPNMTTNE…SHLSYLRESS (87 aa)). The disordered stretch occupies residues 209–271 (DQSSRLSVKE…PYQILGPTSS (63 aa)). Residues 215–226 (SVKEDPSYDSVR) are compositionally biased toward basic and acidic residues. Residues 248-257 (QTISKNTEQR) show a composition bias toward polar residues. A DNA-binding region (ETS) is located at residues 281 to 361 (IQLWQFLLEL…HGKRYAYKFD (81 aa)). Positions 433–452 (NPNVPRHPNTHVPSHLGSYY) are disordered.

It belongs to the ETS family. In terms of assembly, can form homodimers or heterodimers with ETV6/TEL1.

It localises to the nucleus. Its function is as follows. Sequence-specific transcriptional activator. Recognizes the DNA sequence 5'-C[CA]GGAAGT-3'. The polypeptide is Friend leukemia integration 1 transcription factor (FLI1) (Homo sapiens (Human)).